A 156-amino-acid polypeptide reads, in one-letter code: SsrA-binding protein (156 aa).

This sequence belongs to the SmpB family.

It localises to the cytoplasm. Functionally, required for rescue of stalled ribosomes mediated by trans-translation. Binds to transfer-messenger RNA (tmRNA), required for stable association of tmRNA with ribosomes. tmRNA and SmpB together mimic tRNA shape, replacing the anticodon stem-loop with SmpB. tmRNA is encoded by the ssrA gene; the 2 termini fold to resemble tRNA(Ala) and it encodes a 'tag peptide', a short internal open reading frame. During trans-translation Ala-aminoacylated tmRNA acts like a tRNA, entering the A-site of stalled ribosomes, displacing the stalled mRNA. The ribosome then switches to translate the ORF on the tmRNA; the nascent peptide is terminated with the 'tag peptide' encoded by the tmRNA and targeted for degradation. The ribosome is freed to recommence translation, which seems to be the essential function of trans-translation. The chain is SsrA-binding protein from Bacillus pumilus (strain SAFR-032).